A 207-amino-acid polypeptide reads, in one-letter code: Ubiquinol-cytochrome c reductase iron-sulfur subunit (207 aa).

Residues 24 to 44 (LVAATSVVGAVGAGYALVPFV) traverse the membrane as a helical segment. One can recognise a Rieske domain in the interval 100–199 (PKLVDPTSEV…HVYLNDTTIL (100 aa)). [2Fe-2S] cluster is bound by residues C134, H136, C162, and H165. Residues C139 and C164 are joined by a disulfide bond.

The main subunits of complex b-c1 are: cytochrome b, cytochrome c1 and the Rieske protein. It depends on [2Fe-2S] cluster as a cofactor.

It localises to the cell membrane. It catalyses the reaction a quinol + 2 Fe(III)-[cytochrome c](out) = a quinone + 2 Fe(II)-[cytochrome c](out) + 2 H(+)(out). Its function is as follows. Component of the ubiquinol-cytochrome c reductase complex (complex III or cytochrome b-c1 complex), which is a respiratory chain that generates an electrochemical potential coupled to ATP synthesis. In Allochromatium vinosum (strain ATCC 17899 / DSM 180 / NBRC 103801 / NCIMB 10441 / D) (Chromatium vinosum), this protein is Ubiquinol-cytochrome c reductase iron-sulfur subunit (petA).